The primary structure comprises 312 residues: NAD(P)(+)--arginine ADP-ribosyltransferase 2 (312 aa).

The first 20 residues, 1 to 20 (MELLALRWVLLAGTLLSTSA), serve as a signal peptide directing secretion. Positions 21–31 (ASSALQEGDLG) are excised as a propeptide. Disulfide bonds link Cys51–Cys260 and Cys159–Cys208. A TR mART core domain is found at 71–256 (YAYAVGWRKA…IYLRSKGKMS (186 aa)). NAD(+) is bound by residues Tyr108, Arg164, and Gln183. Residue Arg164 is part of the active site. The active site involves Ser186. Ser217 is an NAD(+) binding site. The active site involves Glu224. The propeptide occupies 267-312 (GGQWGRGHQEVGLGLSPGLALPVLPCSNCSCWGSGHRAGDPIPAAV).

It belongs to the Arg-specific ADP-ribosyltransferase family.

The protein resides in the secreted. It localises to the extracellular space. It carries out the reaction L-arginyl-[protein] + NAD(+) = N(omega)-(ADP-D-ribosyl)-L-arginyl-[protein] + nicotinamide + H(+). The chain is NAD(P)(+)--arginine ADP-ribosyltransferase 2 from Gallus gallus (Chicken).